The following is a 404-amino-acid chain: Schlafen-like protein 1 (404 aa).

Disordered regions lie at residues 1 to 31 (MTPM…LPTE) and 139 to 170 (GPLS…AWPT). The segment covering 7 to 16 (SVQTQVSEPF) has biased composition (polar residues). Over residues 152 to 165 (GLSPGPNPGSGVPL) the composition is skewed to low complexity. Residue 258–265 (GVEDSGLV) participates in ATP binding. A coiled-coil region spans residues 365-395 (RWLVELGKLEERVKVLTMEKEQLQQQLQQHG).

This sequence belongs to the Schlafen family. Subgroup I subfamily.

In Macaca fascicularis (Crab-eating macaque), this protein is Schlafen-like protein 1 (SLFNL1).